A 231-amino-acid chain; its full sequence is tRNA (guanine-N(1)-)-methyltransferase (231 aa).

Residues glycine 111 and 131–136 each bind S-adenosyl-L-methionine; that span reads LGNYVL.

This sequence belongs to the RNA methyltransferase TrmD family. In terms of assembly, homodimer.

It localises to the cytoplasm. The enzyme catalyses guanosine(37) in tRNA + S-adenosyl-L-methionine = N(1)-methylguanosine(37) in tRNA + S-adenosyl-L-homocysteine + H(+). In terms of biological role, specifically methylates guanosine-37 in various tRNAs. The chain is tRNA (guanine-N(1)-)-methyltransferase from Leptospira interrogans serogroup Icterohaemorrhagiae serovar copenhageni (strain Fiocruz L1-130).